The chain runs to 372 residues: Tribbles homolog 1 (372 aa).

Disordered stretches follow at residues 1–26 and 49–85; these read MRVGPVRFALSGASQPRGPGLLFPAA and RLSECSSPPDYLSPPGSPCSPQPPPSTQGTGGSCVSS. Positions 59 to 74 are enriched in pro residues; sequence YLSPPGSPCSPQPPPS. The Protein kinase domain maps to 91-338; sequence IADYLLLPLA…APQILLHPWF (248 aa). The short motif at 355–360 is the COP1-binding element; it reads DQIVPE.

The protein belongs to the protein kinase superfamily. CAMK Ser/Thr protein kinase family. Tribbles subfamily. Monomer. Interacts (via protein kinase domain) with CEBPA. Interacts with COP1.

Its function is as follows. Adapter protein involved in protein degradation by interacting with COP1 ubiquitin ligase. Promotes CEBPA degradation and inhibits its function. Controls macrophage, eosinophil and neutrophil differentiation via the COP1-binding domain. Regulates myeloid cell differentiation by altering the expression of CEBPA in a COP1-dependent manner. Interacts with MAPK kinases and regulates activation of MAP kinases, but has no kinase activity. The protein is Tribbles homolog 1 of Mus musculus (Mouse).